The chain runs to 214 residues: Ribonuclease T (214 aa).

Residues 20–195 (VVVDVETAGF…YDTQQTAELF (176 aa)) form the Exonuclease domain. Residues D23, E25, H182, and D187 each contribute to the Mg(2+) site. The active-site Proton donor/acceptor is the H182.

Belongs to the RNase T family. As to quaternary structure, homodimer. It depends on Mg(2+) as a cofactor.

Trims short 3' overhangs of a variety of RNA species, leaving a one or two nucleotide 3' overhang. Responsible for the end-turnover of tRNA: specifically removes the terminal AMP residue from uncharged tRNA (tRNA-C-C-A). Also appears to be involved in tRNA biosynthesis. The protein is Ribonuclease T of Vibrio campbellii (strain ATCC BAA-1116).